Here is a 70-residue protein sequence, read N- to C-terminus: DNA gyrase inhibitor YacG (70 aa).

C20, C23, C35, and C39 together coordinate Zn(2+).

It belongs to the DNA gyrase inhibitor YacG family. Interacts with GyrB. The cofactor is Zn(2+).

Inhibits all the catalytic activities of DNA gyrase by preventing its interaction with DNA. Acts by binding directly to the C-terminal domain of GyrB, which probably disrupts DNA binding by the gyrase. The protein is DNA gyrase inhibitor YacG of Rhizobium leguminosarum bv. trifolii (strain WSM2304).